The following is a 598-amino-acid chain: 2-succinyl-5-enolpyruvyl-6-hydroxy-3-cyclohexene-1-carboxylate synthase (598 aa).

This sequence belongs to the TPP enzyme family. MenD subfamily. Homodimer. It depends on Mg(2+) as a cofactor. Mn(2+) is required as a cofactor. Thiamine diphosphate serves as cofactor.

The enzyme catalyses isochorismate + 2-oxoglutarate + H(+) = 5-enolpyruvoyl-6-hydroxy-2-succinyl-cyclohex-3-ene-1-carboxylate + CO2. It participates in quinol/quinone metabolism; 1,4-dihydroxy-2-naphthoate biosynthesis; 1,4-dihydroxy-2-naphthoate from chorismate: step 2/7. It functions in the pathway cofactor biosynthesis; phylloquinone biosynthesis. Catalyzes the thiamine diphosphate-dependent decarboxylation of 2-oxoglutarate and the subsequent addition of the resulting succinic semialdehyde-thiamine pyrophosphate anion to isochorismate to yield 2-succinyl-5-enolpyruvyl-6-hydroxy-3-cyclohexene-1-carboxylate (SEPHCHC). The sequence is that of 2-succinyl-5-enolpyruvyl-6-hydroxy-3-cyclohexene-1-carboxylate synthase from Prochlorococcus marinus (strain NATL1A).